Reading from the N-terminus, the 210-residue chain is Probable GTP-binding protein EngB (210 aa).

Residues 30–204 (QGYEVAFAGR…YRVLADWMEL (175 aa)) enclose the EngB-type G domain. GTP-binding positions include 38–45 (GRSNAGKS), 64–68 (GRTQL), 82–85 (DLPG), 149–152 (TKAD), and 182–185 (LFSA). The Mg(2+) site is built by serine 45 and threonine 66.

This sequence belongs to the TRAFAC class TrmE-Era-EngA-EngB-Septin-like GTPase superfamily. EngB GTPase family. Mg(2+) serves as cofactor.

Its function is as follows. Necessary for normal cell division and for the maintenance of normal septation. The protein is Probable GTP-binding protein EngB of Pseudomonas putida (strain ATCC 700007 / DSM 6899 / JCM 31910 / BCRC 17059 / LMG 24140 / F1).